Consider the following 396-residue polypeptide: NAD(P)H oxidoreductase RTN4IP1, mitochondrial (396 aa).

A mitochondrion-targeting transit peptide spans 1 to 40 (MGVLKTCVLRRSACAAACFWRRTVIPKPPFRGISTTSARS). An Enoyl reductase (ER) domain is found at 52–393 (GKNEVLRFTQ…RGHARGKTVV (342 aa)). Serine 214, glycine 216, valine 217, serine 237, tyrosine 255, asparagine 276, leucine 300, alanine 341, phenylalanine 343, histidine 386, alanine 387, and arginine 388 together coordinate NADPH.

This sequence belongs to the zinc-containing alcohol dehydrogenase family. Quinone oxidoreductase subfamily. Interacts with RTN4, UQCRC1 and UQCRC2. As to expression, widely expressed in mitochondria-enriched tissues. Found in heart, kidney, liver, brain and spinal cord.

The protein localises to the mitochondrion matrix. Its subcellular location is the mitochondrion outer membrane. The enzyme catalyses a 3-demethylubiquinone + NADH + 2 H(+) = a 3-demethylubiquinol + NAD(+). It catalyses the reaction a 3-demethylubiquinone + NADPH + 2 H(+) = a 3-demethylubiquinol + NADP(+). The catalysed reaction is 3-demethylubiquinone-10 + NADH + 2 H(+) = 3-demethylubiquinol-10 + NAD(+). It carries out the reaction 3-demethylubiquinone-10 + NADPH + 2 H(+) = 3-demethylubiquinol-10 + NADP(+). It functions in the pathway cofactor biosynthesis; ubiquinone biosynthesis. Its function is as follows. NAD(P)H oxidoreductase involved in the ubiquinone biosynthetic pathway. Required for the O-methyltransferase activity of COQ3. Able to catalyze the oxidoreduction of 3-demethylubiquinone into 3-demethylubiquinol in vitro. However, it is unclear if 3-demethylubiquinone constitutes a substrate in vivo. May also play a role in the regulation of retinal ganglion cell (RGC) neurite outgrowth, and hence in the development of the inner retina and optic nerve. Appears to be a potent inhibitor of regeneration following spinal cord injury. This chain is NAD(P)H oxidoreductase RTN4IP1, mitochondrial, found in Mus musculus (Mouse).